The sequence spans 987 residues: Ephrin type-B receptor 2 (987 aa).

A signal peptide spans 1–19 (MGPLWFCCLPLALLPLLAA). Residues 20–544 (VEETLMDSTT…QTSVQEKLPL (525 aa)) lie on the Extracellular side of the membrane. The 183-residue stretch at 21 to 203 (EETLMDSTTA…FYRKCPRVIQ (183 aa)) folds into the Eph LBD domain. 2 cysteine pairs are disulfide-bonded: Cys-63/Cys-185 and Cys-98/Cys-108. 5 N-linked (GlcNAc...) asparagine glycosylation sites follow: Asn-266, Asn-337, Asn-429, Asn-478, and Asn-483. 2 consecutive Fibronectin type-III domains span residues 325–435 (IPSA…TNQA) and 436–531 (APSA…TMTE). A helical membrane pass occupies residues 545 to 565 (IIGSSAAGLVFLIAVVVIIIV). The Cytoplasmic segment spans residues 566–987 (CNRRGFERAD…QMNQIQSVEV (422 aa)). Residues 622–885 (VKIEQVIGAG…QIVNTLDKMI (264 aa)) form the Protein kinase domain. ATP-binding positions include 628-636 (IGAGEFGEV) and Lys-654. Residue Asp-747 is the Proton acceptor of the active site. Lys-892 is covalently cross-linked (Glycyl lysine isopeptide (Lys-Gly) (interchain with G-Cter in ubiquitin)). In terms of domain architecture, SAM spans 914–978 (TSFNTVDEWL…LNSIQVMRAQ (65 aa)). Positions 985 to 987 (VEV) match the PDZ-binding motif.

It belongs to the protein kinase superfamily. Tyr protein kinase family. Ephrin receptor subfamily. Heterotetramer upon binding of the ligand. The heterotetramer is composed of an ephrin dimer and a receptor dimer. Oligomerization is probably required to induce biological responses. Ligand binding induces cleavage by matrix metalloproteinases (MMPs) such as MMP7/MMP9, producing an EphB2/N-terminal fragment (NTF) and a C-terminal long fragment (EphB2-LF). EphB2-LF is further cleaved by MMPs, producing EphB2/CTF1 which is further cleaved by the PS1/gamma-secretase producing EphB2/CTF2. In terms of processing, polyubiquitinated; ligand binding stimulates ubiquitination. Ubiquitinated by RNF186 at Lys-892, mainly through 'Lys-27'-linked polyubiquitin chains.

Its subcellular location is the cell membrane. It localises to the cell projection. The protein resides in the axon. It is found in the dendrite. The enzyme catalyses L-tyrosyl-[protein] + ATP = O-phospho-L-tyrosyl-[protein] + ADP + H(+). Its function is as follows. Receptor tyrosine kinase which binds promiscuously transmembrane ephrin-B family ligands residing on adjacent cells, leading to contact-dependent bidirectional signaling into neighboring cells. The signaling pathway downstream of the receptor is referred to as forward signaling while the signaling pathway downstream of the ephrin ligand is referred to as reverse signaling. Functions in axon guidance during development. In addition to axon guidance, also regulates dendritic spines development and maturation and stimulates the formation of excitatory synapses. The polypeptide is Ephrin type-B receptor 2 (EPHB2) (Coturnix japonica (Japanese quail)).